The sequence spans 205 residues: Probable inactive peroxygenase-like protein (205 aa).

Residues 79–88 carry the Proline-knot motif; sequence PVQLFGYILP. Phosphoserine is present on Ser-183.

Belongs to the caleosin family.

Its subcellular location is the lipid droplet. The chain is Probable inactive peroxygenase-like protein from Arabidopsis thaliana (Mouse-ear cress).